The primary structure comprises 103 residues: ATP synthase subunit H, mitochondrial (103 aa).

Residues 1 to 26 (MSRILKSLSRSYSTTSPRLYVDVVQG) constitute a mitochondrion transit peptide.

It belongs to the ATPase h subunit family. In terms of assembly, F-type ATPases have 2 components, CF(1) - the catalytic core - and CF(0) - the membrane proton channel.

The protein localises to the mitochondrion. The protein resides in the mitochondrion inner membrane. Its function is as follows. Mitochondrial membrane ATP synthase (F(1)F(0) ATP synthase or Complex V) produces ATP from ADP in the presence of a proton gradient across the membrane which is generated by electron transport complexes of the respiratory chain. F-type ATPases consist of two structural domains, F(1) - containing the extramembraneous catalytic core and F(0) - containing the membrane proton channel, linked together by a central stalk and a peripheral stalk. During catalysis, ATP synthesis in the catalytic domain of F(1) is coupled via a rotary mechanism of the central stalk subunits to proton translocation. Part of the complex F(0) domain. Minor subunit located with subunit a in the membrane. In Schizosaccharomyces pombe (strain 972 / ATCC 24843) (Fission yeast), this protein is ATP synthase subunit H, mitochondrial (atp14).